The sequence spans 294 residues: Putative sugar lactone lactonase (294 aa).

A divalent metal cation contacts are provided by Glu-21, Asn-150, and Asp-201. Catalysis depends on Asp-201, which acts as the Proton donor/acceptor.

The protein belongs to the SMP-30/CGR1 family. A divalent metal cation is required as a cofactor.

Its function is as follows. Involved in the degradation of galactose via the DeLey-Doudoroff pathway. The chain is Putative sugar lactone lactonase from Rhizobium meliloti (strain 1021) (Ensifer meliloti).